Consider the following 223-residue polypeptide: Probable cytokinin riboside 5'-monophosphate phosphoribohydrolase LOGL1 (223 aa).

Residues glutamate 89, 107 to 108 (RK), 124 to 130 (GYGTMEE), and threonine 136 each bind substrate. A disordered region spans residues 201–223 (QEVAPRTSWEMSELGYGKTPEES).

Belongs to the LOG family. In terms of tissue distribution, expressed in shoot apex, immature inflorescences and flowers.

It catalyses the reaction N(6)-(dimethylallyl)adenosine 5'-phosphate + H2O = N(6)-dimethylallyladenine + D-ribose 5-phosphate. The enzyme catalyses 9-ribosyl-trans-zeatin 5'-phosphate + H2O = trans-zeatin + D-ribose 5-phosphate. In terms of biological role, cytokinin-activating enzyme working in the direct activation pathway. Phosphoribohydrolase that converts inactive cytokinin nucleotides to the biologically active free-base forms. In Oryza sativa subsp. japonica (Rice), this protein is Probable cytokinin riboside 5'-monophosphate phosphoribohydrolase LOGL1 (LOGL1).